The following is a 357-amino-acid chain: 4-hydroxyphenylpyruvate dioxygenase (357 aa).

2 VOC domains span residues 17–137 (GFEF…LVDR) and 165–316 (YIDH…IFTD). Residues His-168, His-246, and Glu-325 each coordinate Fe cation.

It belongs to the 4HPPD family. As to quaternary structure, homotetramer. Fe cation is required as a cofactor.

The catalysed reaction is 3-(4-hydroxyphenyl)pyruvate + O2 = homogentisate + CO2. The protein operates within amino-acid degradation; L-phenylalanine degradation; acetoacetate and fumarate from L-phenylalanine: step 3/6. This is 4-hydroxyphenylpyruvate dioxygenase (hpd) from Pseudomonas aeruginosa (strain ATCC 15692 / DSM 22644 / CIP 104116 / JCM 14847 / LMG 12228 / 1C / PRS 101 / PAO1).